The primary structure comprises 44 residues: QPRSHVDCPALHGQCQSLPCTYPLVFVGPDPFHCGPYPQFGCCA.

3 disulfide bridges follow: cysteine 8–cysteine 42, cysteine 15–cysteine 34, and cysteine 20–cysteine 43.

Expressed in tentacles.

Its subcellular location is the nematocyst. The protein localises to the secreted. In terms of biological role, peptide with unknown function. Does not exhibit antimicrobial activity against Escherichia coli and Staphylococcus aureus. Does not exhibit any effect on human ion channel TRPV1 in a Xenopus laevis oocytes assay. This Heliofungia actiniformis (Mushroom coral) protein is Peptide Hact-4.